Here is a 129-residue protein sequence, read N- to C-terminus: Large ribosomal subunit protein bL20 (129 aa).

It belongs to the bacterial ribosomal protein bL20 family.

Functionally, binds directly to 23S ribosomal RNA and is necessary for the in vitro assembly process of the 50S ribosomal subunit. It is not involved in the protein synthesizing functions of that subunit. The chain is Large ribosomal subunit protein bL20 from Mycobacterium marinum (strain ATCC BAA-535 / M).